Consider the following 328-residue polypeptide: Cytochrome c biogenesis protein CcsA (328 aa).

Transmembrane regions (helical) follow at residues 13–33, 46–66, 73–93, 101–121, 146–166, 234–254, 263–283, and 295–315; these read ISFS…LVNL, GIVI…IYSG, LYES…ISYF, LNAI…SGLL, MILG…LLVI, IISL…VWAN, WDPK…FLHI, and AIVA…VNLL.

The protein belongs to the CcmF/CycK/Ccl1/NrfE/CcsA family. In terms of assembly, may interact with Ccs1.

It is found in the plastid. The protein resides in the chloroplast thylakoid membrane. Functionally, required during biogenesis of c-type cytochromes (cytochrome c6 and cytochrome f) at the step of heme attachment. This chain is Cytochrome c biogenesis protein CcsA, found in Arabis hirsuta (Hairy rock-cress).